The sequence spans 390 residues: UPF0229 protein ABC1477 (390 aa).

2 disordered regions span residues 1-31 and 81-118; these read MEKD…RHQE and VGQG…QAGE. Positions 7–16 are enriched in polar residues; sequence RQFTISQENW. Basic and acidic residues-rich tracts occupy residues 22 to 31 and 86 to 100; these read GFQDQRRHQE and GDSK…DPNG.

It belongs to the UPF0229 family.

This Shouchella clausii (strain KSM-K16) (Alkalihalobacillus clausii) protein is UPF0229 protein ABC1477.